A 177-amino-acid polypeptide reads, in one-letter code: ATP-dependent protease subunit HslV (177 aa).

The active site involves Thr4. Na(+) contacts are provided by Ser159, Cys162, and Thr165.

The protein belongs to the peptidase T1B family. HslV subfamily. A double ring-shaped homohexamer of HslV is capped on each side by a ring-shaped HslU homohexamer. The assembly of the HslU/HslV complex is dependent on binding of ATP.

It is found in the cytoplasm. It carries out the reaction ATP-dependent cleavage of peptide bonds with broad specificity.. Allosterically activated by HslU binding. Protease subunit of a proteasome-like degradation complex believed to be a general protein degrading machinery. The protein is ATP-dependent protease subunit HslV of Mesorhizobium japonicum (strain LMG 29417 / CECT 9101 / MAFF 303099) (Mesorhizobium loti (strain MAFF 303099)).